The sequence spans 451 residues: UPF0210 protein NMCC_1554 (451 aa).

This sequence belongs to the UPF0210 family. Homodimer.

This Neisseria meningitidis serogroup C (strain 053442) protein is UPF0210 protein NMCC_1554.